The chain runs to 504 residues: DnaJ homolog subfamily C member 3 (504 aa).

An N-terminal signal peptide occupies residues 1 to 31 (MVAPGSVTSRLGSVFPFLLVLVDLQYEGAEC). 9 TPR repeats span residues 37-70 (VEKH…DPDN), 72-104 (IAYY…KMDF), 105-138 (TAAR…NPSE), 154-187 (MQRL…CVWD), 189-221 (ELRE…KNDN), 222-255 (TEAF…DQDH), 268-301 (LNKL…EPGV), 306-339 (IRSK…EPDN), and 340-373 (VNAL…NEND). C248 and C258 are joined by a disulfide. Position 274 is a phosphoserine (S274). The cysteines at positions 313 and 329 are disulfide-linked. Positions 375-393 (QIREGLEKAQRLLKQSQRR) are flexible linker. In terms of domain architecture, J spans 394–462 (DYYKILGVKR…EMRKKFDDGE (69 aa)). The tract at residues 451–481 (DPEMRKKFDDGEDPLDAESQQGGGGNPFHRS) is disordered.

As to quaternary structure, interacts with EIF2AK4/GCN2; this interaction occurs under endoplasmic reticulum (ER) stress, hypothermic and amino acid starving stress conditions and inhibits EIF2AK4/GCN2 kinase activity. Interacts with EIF2AK3. Interacts with EIF2AK2. Forms a trimeric complex with DNAJB1 and HSPA8. Interacts with THAP12.

It is found in the endoplasmic reticulum. Its function is as follows. Involved in the unfolded protein response (UPR) during endoplasmic reticulum (ER) stress. Acts as a negative regulator of the EIF2AK4/GCN2 kinase activity by preventing the phosphorylation of eIF-2-alpha at 'Ser-52' and hence attenuating general protein synthesis under ER stress, hypothermic and amino acid starving stress conditions. Co-chaperone of HSPA8/HSC70, it stimulates its ATPase activity. May inhibit both the autophosphorylation of EIF2AK2/PKR and the ability of EIF2AK2 to catalyze phosphorylation of the EIF2A. May inhibit EIF2AK3/PERK activity. This is DnaJ homolog subfamily C member 3 (DNAJC3) from Bos taurus (Bovine).